We begin with the raw amino-acid sequence, 30 residues long: GIPCGESCVWIPCITSAIGCSCKSKVCYRN.

The segment at residues 1–30 (GIPCGESCVWIPCITSAIGCSCKSKVCYRN) is a cross-link (cyclopeptide (Gly-Asn)). 3 disulfide bridges follow: Cys-4–Cys-20, Cys-8–Cys-22, and Cys-13–Cys-27.

In terms of processing, this is a cyclic peptide.

Functionally, probably participates in a plant defense mechanism. Has strong cytotoxic activity against human lymphoma U-937 GTB and human myeloma RPMI-8226/s cell lines. In Viola arvensis (European field pansy), this protein is Vitri peptide A.